A 223-amino-acid polypeptide reads, in one-letter code: Small ribosomal subunit protein uS3 (223 aa).

A KH type-2 domain is found at 39 to 117; it reads IREHLRKKPS…RPELNAKLVA (79 aa).

Belongs to the universal ribosomal protein uS3 family. In terms of assembly, part of the 30S ribosomal subunit. Forms a tight complex with proteins S10 and S14.

Binds the lower part of the 30S subunit head. Binds mRNA in the 70S ribosome, positioning it for translation. The protein is Small ribosomal subunit protein uS3 of Chlamydia felis (strain Fe/C-56) (Chlamydophila felis).